The primary structure comprises 179 residues: Viral interleukin-10 homolog (179 aa).

The first 18 residues, 1–18 (MFRASLLCCLVLLAGVWA), serve as a signal peptide directing secretion. Cystine bridges form between Cys30/Cys127 and Cys80/Cys133. Residues Asn100 and Asn135 are each glycosylated (N-linked (GlcNAc...) asparagine; by host).

The protein belongs to the IL-10 family.

Its subcellular location is the secreted. Down-regulates the expression of the TAP1 gene (transporter associated with antigen processing), thereby affecting the transport of peptides into the endoplasmic reticulum and subsequent peptide loading by MHC class I molecules. In consequence, infected cells are masked for immune recognition by cytotoxic T-lymphocytes. The sequence is that of Viral interleukin-10 homolog from Equus caballus (Horse).